The primary structure comprises 338 residues: Ketol-acid reductoisomerase (NADP(+)) (338 aa).

One can recognise a KARI N-terminal Rossmann domain in the interval 1 to 181 (MKIYYDKDCN…GGGRAGIIET (181 aa)). NADP(+) is bound by residues 24–27 (YGSQ), lysine 47, serine 50, serine 52, and 82–85 (DEIQ). Histidine 107 is a catalytic residue. Residue glycine 133 participates in NADP(+) binding. The KARI C-terminal knotted domain occupies 182-327 (SFKEETETDL…ARLRSMMSWI (146 aa)). Mg(2+) contacts are provided by aspartate 190, glutamate 194, glutamate 226, and glutamate 230. Serine 251 is a binding site for substrate.

It belongs to the ketol-acid reductoisomerase family. Mg(2+) serves as cofactor.

It carries out the reaction (2R)-2,3-dihydroxy-3-methylbutanoate + NADP(+) = (2S)-2-acetolactate + NADPH + H(+). The catalysed reaction is (2R,3R)-2,3-dihydroxy-3-methylpentanoate + NADP(+) = (S)-2-ethyl-2-hydroxy-3-oxobutanoate + NADPH + H(+). Its pathway is amino-acid biosynthesis; L-isoleucine biosynthesis; L-isoleucine from 2-oxobutanoate: step 2/4. It functions in the pathway amino-acid biosynthesis; L-valine biosynthesis; L-valine from pyruvate: step 2/4. In terms of biological role, involved in the biosynthesis of branched-chain amino acids (BCAA). Catalyzes an alkyl-migration followed by a ketol-acid reduction of (S)-2-acetolactate (S2AL) to yield (R)-2,3-dihydroxy-isovalerate. In the isomerase reaction, S2AL is rearranged via a Mg-dependent methyl migration to produce 3-hydroxy-3-methyl-2-ketobutyrate (HMKB). In the reductase reaction, this 2-ketoacid undergoes a metal-dependent reduction by NADPH to yield (R)-2,3-dihydroxy-isovalerate. This Geobacter sulfurreducens (strain ATCC 51573 / DSM 12127 / PCA) protein is Ketol-acid reductoisomerase (NADP(+)).